The chain runs to 309 residues: Tagatose-6-phosphate kinase (309 aa).

This sequence belongs to the carbohydrate kinase PfkB family. LacC subfamily.

The catalysed reaction is D-tagatofuranose 6-phosphate + ATP = D-tagatofuranose 1,6-bisphosphate + ADP + H(+). The protein operates within carbohydrate metabolism; D-tagatose 6-phosphate degradation; D-glyceraldehyde 3-phosphate and glycerone phosphate from D-tagatose 6-phosphate: step 1/2. The chain is Tagatose-6-phosphate kinase from Streptococcus pyogenes serotype M28 (strain MGAS6180).